A 290-amino-acid chain; its full sequence is Putative OX-2 membrane glycoprotein homolog (290 aa).

The signal sequence occupies residues 1–17 (MSSLMLRLLPLLYIISA). Residues 18-267 (HFVLHPETSP…SDETVFTWTV (250 aa)) are Extracellular-facing. Residues 23–135 (PETSPSLIYE…TFTVDNEKTS (113 aa)) form the Ig-like V-type domain. Cysteine 41 and cysteine 125 form a disulfide bridge. Asparagine 71, asparagine 104, asparagine 194, and asparagine 202 each carry an N-linked (GlcNAc...) asparagine; by host glycan. One can recognise an Ig-like C2-type domain in the interval 146-236 (PIVVLYFRYL…TNQKASALVT (91 aa)). A helical membrane pass occupies residues 268–288 (PLILILISVIVLLISVCIVAF). At 289 to 290 (KS) the chain is on the cytoplasmic side.

It is found in the membrane. The chain is Putative OX-2 membrane glycoprotein homolog (U85) from Homo sapiens (Human).